Reading from the N-terminus, the 148-residue chain is Arginine repressor (148 aa).

The protein belongs to the ArgR family.

Its subcellular location is the cytoplasm. It functions in the pathway amino-acid biosynthesis; L-arginine biosynthesis [regulation]. In terms of biological role, regulates arginine biosynthesis genes. The chain is Arginine repressor from Prosthecochloris aestuarii (strain DSM 271 / SK 413).